The chain runs to 363 residues: rRNA processing protein rcl1 (363 aa).

Belongs to the RNA 3'-terminal cyclase family. Type 2 subfamily. Interacts directly with bms1 and the U3 snoRNA to form a stable subcomplex. Component of the 90S small subunit processome also known as 90S pre-ribosome that consists of the 35S pre-rRNA, early-associating ribosomal proteins most of which are part of the small ribosomal subunit, the U3 snoRNA and associated proteins.

It localises to the nucleus. It is found in the nucleolus. Does not have cyclase activity. Plays a role in 40S-ribosomal-subunit biogenesis in the early pre-rRNA processing steps at sites A0, A1 and A2 that are required for proper maturation of the 18S RNA. Rcl1 activates bms1 by promoting GDP/GTP exchange. This Schizosaccharomyces pombe (strain 972 / ATCC 24843) (Fission yeast) protein is rRNA processing protein rcl1 (rcl1).